The following is a 518-amino-acid chain: Nitrogenase iron-iron protein alpha chain (518 aa).

[8Fe-7S] cluster contacts are provided by Cys-49 and Cys-75. Cys-257 and His-423 together coordinate [8Fe-9S-C-homocitryl] cluster.

Hexamer of two alpha, two beta, and two delta chains. Requires [8Fe-7S] cluster as cofactor. [8Fe-9S-C-homocitryl] cluster serves as cofactor.

The enzyme catalyses N2 + 8 reduced [2Fe-2S]-[ferredoxin] + 16 ATP + 16 H2O = H2 + 8 oxidized [2Fe-2S]-[ferredoxin] + 2 NH4(+) + 16 ADP + 16 phosphate + 6 H(+). Functionally, this iron-iron protein is part of the nitrogenase complex that catalyzes the key enzymatic reactions in nitrogen fixation. Other nitrogenase complexes utilize a molybdenum-iron protein or a vanadium-iron protein. The polypeptide is Nitrogenase iron-iron protein alpha chain (anfD) (Ruminiclostridium hungatei (Clostridium hungatei)).